The primary structure comprises 369 residues: Glutamate 5-kinase (369 aa).

An ATP-binding site is contributed by Lys11. 3 residues coordinate substrate: Ser51, Asp138, and Asn150. Residues Thr170 to Asp171 and Thr212 to Lys218 each bind ATP. In terms of domain architecture, PUA spans Asn277–Glu355.

Belongs to the glutamate 5-kinase family.

The protein localises to the cytoplasm. It carries out the reaction L-glutamate + ATP = L-glutamyl 5-phosphate + ADP. It functions in the pathway amino-acid biosynthesis; L-proline biosynthesis; L-glutamate 5-semialdehyde from L-glutamate: step 1/2. Catalyzes the transfer of a phosphate group to glutamate to form L-glutamate 5-phosphate. In Aliivibrio salmonicida (strain LFI1238) (Vibrio salmonicida (strain LFI1238)), this protein is Glutamate 5-kinase.